Reading from the N-terminus, the 1011-residue chain is Vacuolar membrane protease (1011 aa).

Residues 1-14 (MKLTKAVFRFRRTN) lie on the Cytoplasmic side of the membrane. The chain crosses the membrane as a helical span at residues 15-35 (LSTLLVITYLVITTLYVWDHF). Over 36 to 352 (RYHFTLPSDY…WFVVWSARSL (317 aa)) the chain is Vacuolar. Histidine 149, aspartate 161, glutamate 194, glutamate 219, and histidine 293 together coordinate Zn(2+). Residues 353-373 (FYWNCIILALFPSILAILFLV) traverse the membrane as a helical segment. The Cytoplasmic segment spans residues 374-390 (AYDMQLLKFNFWDAMLR). A helical transmembrane segment spans residues 391–411 (LPVSVCLAYFCVKLFQVLVGQ). Residues 412-420 (LNPYVFSRD) lie on the Vacuolar side of the membrane. The helical transmembrane segment at 421–441 (YVSPILAEASMFIFMNYVILS) threads the bilayer. Residues 442–451 (SWERLRPLRD) are Cytoplasmic-facing. Residues 452-472 (FKTVALVEVSMVLWIYLISVT) form a helical membrane-spanning segment. Over 473–487 (RWLRDSDYTATGLYP) the chain is Vacuolar. A helical transmembrane segment spans residues 488 to 508 (FTIGYTFVSIGAIIGVFCATF). The Cytoplasmic segment spans residues 509–647 (KAKLNPEDDS…SILNYDWSIQ (139 aa)). Residues 534–585 (MQHQYQQHSQKHSNQHSPHHSTHHSAQHSVHHSPRQSIHQVPSSEQRQRDAS) are disordered. Residues 542-567 (SQKHSNQHSPHHSTHHSAQHSVHHSP) show a composition bias toward basic residues. Positions 568-578 (RQSIHQVPSSE) are enriched in polar residues. A helical membrane pass occupies residues 648 to 668 (FMVVTPWVTYFTWICLDLIMG). The Vacuolar segment spans residues 669-681 (AMNQTIQESAKGT). Asparagine 671 carries N-linked (GlcNAc...) asparagine glycosylation. Residues 682–702 (TFVTHMALIGSLLLSLPMLPF) traverse the membrane as a helical segment. Topologically, residues 703–708 (TYKLHS) are cytoplasmic. The helical transmembrane segment at 709–729 (FAGMLFLLLAVTTAVWTIVAP) threads the bilayer. At 730 to 1011 (PFTESSPLKL…MVSVTKYVEL (282 aa)) the chain is on the vacuolar side. N-linked (GlcNAc...) asparagine glycans are attached at residues asparagine 751, asparagine 825, and asparagine 854.

The protein belongs to the peptidase M28 family. Requires Zn(2+) as cofactor.

The protein localises to the vacuole membrane. Functionally, may be involved in vacuolar sorting and osmoregulation. This chain is Vacuolar membrane protease, found in Eremothecium gossypii (strain ATCC 10895 / CBS 109.51 / FGSC 9923 / NRRL Y-1056) (Yeast).